The sequence spans 230 residues: Uracil-DNA glycosylase (230 aa).

The active-site Proton acceptor is Asp70.

This sequence belongs to the uracil-DNA glycosylase (UDG) superfamily. UNG family.

It is found in the cytoplasm. It carries out the reaction Hydrolyzes single-stranded DNA or mismatched double-stranded DNA and polynucleotides, releasing free uracil.. In terms of biological role, excises uracil residues from the DNA which can arise as a result of misincorporation of dUMP residues by DNA polymerase or due to deamination of cytosine. The sequence is that of Uracil-DNA glycosylase from Pseudomonas putida (strain W619).